The sequence spans 311 residues: Porphobilinogen deaminase (311 aa).

S-(dipyrrolylmethanemethyl)cysteine is present on Cys242.

Belongs to the HMBS family. Monomer. Dipyrromethane serves as cofactor.

It catalyses the reaction 4 porphobilinogen + H2O = hydroxymethylbilane + 4 NH4(+). Its pathway is porphyrin-containing compound metabolism; protoporphyrin-IX biosynthesis; coproporphyrinogen-III from 5-aminolevulinate: step 2/4. Its function is as follows. Tetrapolymerization of the monopyrrole PBG into the hydroxymethylbilane pre-uroporphyrinogen in several discrete steps. The protein is Porphobilinogen deaminase (hemC) of Neisseria meningitidis serogroup A / serotype 4A (strain DSM 15465 / Z2491).